The following is a 448-amino-acid chain: MLIQRGGLKVVAGLGISGVSAVNFLHEQGYRVAVTDSRETPPGHDQIPQDVQTSFGQLDTELLLQAEEIILSPGLAPQLPEIQQAIAQGIPVIGDIQVLRRATQVPIVAITGSNAKSTVTTLFGQMAKDAGKRVAVGGNLGRPGLDLLKDEPELLVLELSSFQLETTSHLNAEVAVILNMSEDHLDRHGDMLGYHQAKHRIFQGVKKVVYNRDDSLTRPLVPDSTPMQSFGLNAPDIKQYGVLREDDGTMWLARGRTRLIKSSELYIQGTHNIANALACLALGEAIGLPVESMLETLKQFKGLEHRCEYVKTVNDVRYYNDSKGTNVGATLAAIDGLGAAIEPKQGKVIVILGGQGKGQDFSLLRQSVEKYVKAAILIGEDAQQIEQALTETTQLVHASTLKDAVTQAQQYAQPEDVVLLSPACASFDMFKGYPDRGHQFVACVDALV.

112-118 lines the ATP pocket; it reads GSNAKST.

Belongs to the MurCDEF family.

It localises to the cytoplasm. It carries out the reaction UDP-N-acetyl-alpha-D-muramoyl-L-alanine + D-glutamate + ATP = UDP-N-acetyl-alpha-D-muramoyl-L-alanyl-D-glutamate + ADP + phosphate + H(+). It functions in the pathway cell wall biogenesis; peptidoglycan biosynthesis. In terms of biological role, cell wall formation. Catalyzes the addition of glutamate to the nucleotide precursor UDP-N-acetylmuramoyl-L-alanine (UMA). The sequence is that of UDP-N-acetylmuramoylalanine--D-glutamate ligase from Acinetobacter baylyi (strain ATCC 33305 / BD413 / ADP1).